The primary structure comprises 1272 residues: Vitamin B12-dependent ribonucleotide reductase (1272 aa).

Residues Ser-153, 198 to 199 (AC), Gly-230, 474 to 478 (NPCSE), and 675 to 679 (PTGTI) each bind substrate. An intrachain disulfide couples Cys-199 to Cys-487. The Proton acceptor role is filled by Asn-474. The active-site Cysteine radical intermediate is the Cys-476. Catalysis depends on Glu-478, which acts as the Proton acceptor. Residues 1120–1147 (TLVSSNEGDRAASEPKGSATAAPARGSA) form a disordered region.

The protein belongs to the ribonucleoside diphosphate reductase class-2 family. It depends on adenosylcob(III)alamin as a cofactor.

The catalysed reaction is a 2'-deoxyribonucleoside 5'-diphosphate + [thioredoxin]-disulfide + H2O = a ribonucleoside 5'-diphosphate + [thioredoxin]-dithiol. Catalyzes the reduction of ribonucleotides to deoxyribonucleotides. May function to provide a pool of deoxyribonucleotide precursors for DNA repair during oxygen limitation and/or for immediate growth after restoration of oxygen. This chain is Vitamin B12-dependent ribonucleotide reductase (nrdJ), found in Agrobacterium fabrum (strain C58 / ATCC 33970) (Agrobacterium tumefaciens (strain C58)).